The following is a 284-amino-acid chain: Undecaprenyl-diphosphatase (284 aa).

A run of 8 helical transmembrane segments spans residues 7 to 27, 44 to 64, 90 to 110, 116 to 136, 167 to 187, 197 to 217, 229 to 249, and 259 to 279; these read IILG…TGHL, EMFD…LYFH, LWLK…PLND, FYHF…FIVI, VLSL…ALLV, FTFF…ILHF, FGVL…AIKF, and FTFF…YAMF.

It belongs to the UppP family.

It localises to the cell membrane. The enzyme catalyses di-trans,octa-cis-undecaprenyl diphosphate + H2O = di-trans,octa-cis-undecaprenyl phosphate + phosphate + H(+). Its function is as follows. Catalyzes the dephosphorylation of undecaprenyl diphosphate (UPP). Confers resistance to bacitracin. This is Undecaprenyl-diphosphatase from Lactococcus lactis subsp. lactis (strain IL1403) (Streptococcus lactis).